The following is a 90-amino-acid chain: Putative large ribosomal subunit protein uL23c (90 aa).

Residues 1-46 (MDGIKYAVFTDKSIQLLGKKQYTSNVESRSTRTEIKHWVELWNSYE) are coded by first part of gene. A coded by second part of gene region spans residues 47 to 90 (MNSHRLPGKGRRMGPIMGHTMHYRRMIITLQSSYSIPPLRKKRT).

Belongs to the universal ribosomal protein uL23 family. As to quaternary structure, part of the 50S ribosomal subunit.

Its subcellular location is the plastid. The protein resides in the chloroplast. Functionally, binds to 23S rRNA. In Spinacia oleracea (Spinach), this protein is Putative large ribosomal subunit protein uL23c (rpl23).